The chain runs to 79 residues: MIFTPFLPPADLSVFQNVKGLQNDPEEWVAVSDATEDPSGGTGLPREPALLRGSWRSRFQRALACFTKCFRGGYRALGI.

Belongs to the FAM236 family.

The polypeptide is Protein FAM236A (Homo sapiens (Human)).